A 1358-amino-acid polypeptide reads, in one-letter code: DNA mismatch repair protein Msh6 (1358 aa).

Residues 1 to 87 (MSRQSTLYSF…SSAQAVPPSS (87 aa)) form a disordered region. Ser-14, Ser-38, and Ser-40 each carry phosphoserine. Low complexity predominate over residues 25-46 (AEASRQGAAASGASASRGGDAA). Lys-67 carries the N6-acetyllysine modification. Positions 76-87 (ASSSAQAVPPSS) are enriched in low complexity. Residues Ser-91, Ser-137, Ser-200, Ser-219, and Ser-227 each carry the phosphoserine modification. The PWWP domain maps to 92-154 (PGDLVWAKME…KRMLKPYTGS (63 aa)). The segment at 197–360 (DEPSEPEEEE…VSGGGNDSSG (164 aa)) is disordered. Acidic residues-rich tracts occupy residues 198-209 (EPSEPEEEEETE) and 219-231 (SEED…EEEA). Residues 240–249 (RSSRQVKKRR) show a composition bias toward basic residues. Residues Ser-252, Ser-254, Ser-256, and Ser-261 each carry the phosphoserine modification. Over residues 263-273 (VEFKPDTKQEG) the composition is skewed to basic and acidic residues. Residue Thr-269 is modified to Phosphothreonine. Phosphoserine occurs at positions 274, 275, 279, and 280. The segment covering 329–351 (LSETKSTLSAFSAPQNSESQTHV) has biased composition (polar residues). A Phosphothreonine modification is found at Thr-487. The residue at position 503 (Lys-503) is an N6-acetyllysine. A phosphoserine mark is found at Ser-827 and Ser-932. Phosphothreonine is present on Thr-1007. An ATP-binding site is contributed by 1132-1139 (GPNMGGKS).

Belongs to the DNA mismatch repair MutS family. Component of the DNA mismatch repair (MMR) complex composed at least of MSH2, MSH3, MSH6, PMS1 and MLH1. Heterodimer consisting of MSH2-MSH6 (MutS alpha). Forms a ternary complex with MutL alpha (MLH1-PMS1). Interacts with MCM9. Part of the BRCA1-associated genome surveillance complex (BASC), which contains BRCA1, MSH2, MSH6, MLH1, ATM, BLM, PMS2 and the RAD50-MRE11-NBS1 protein complex. This association could be a dynamic process changing throughout the cell cycle and within subnuclear domains. Phosphorylated by PRKCZ, which may prevent MutS alpha degradation by the ubiquitin-proteasome pathway.

The protein localises to the nucleus. It localises to the chromosome. In terms of biological role, component of the post-replicative DNA mismatch repair system (MMR). Heterodimerizes with MSH2 to form MutS alpha, which binds to DNA mismatches thereby initiating DNA repair. When bound, MutS alpha bends the DNA helix and shields approximately 20 base pairs, and recognizes single base mismatches and dinucleotide insertion-deletion loops (IDL) in the DNA. After mismatch binding, forms a ternary complex with the MutL alpha heterodimer, which is thought to be responsible for directing the downstream MMR events, including strand discrimination, excision, and resynthesis. ATP binding and hydrolysis play a pivotal role in mismatch repair functions. The ATPase activity associated with MutS alpha regulates binding similar to a molecular switch: mismatched DNA provokes ADP--&gt;ATP exchange, resulting in a discernible conformational transition that converts MutS alpha into a sliding clamp capable of hydrolysis-independent diffusion along the DNA backbone. This transition is crucial for mismatch repair. MutS alpha may also play a role in DNA homologous recombination repair. Recruited on chromatin in G1 and early S phase via its PWWP domain that specifically binds trimethylated 'Lys-36' of histone H3 (H3K36me3): early recruitment to chromatin to be replicated allowing a quick identification of mismatch repair to initiate the DNA mismatch repair reaction. The chain is DNA mismatch repair protein Msh6 from Mus musculus (Mouse).